The chain runs to 338 residues: Ferredoxin--NADP reductase (338 aa).

Residues Asp-32, Gln-40, Tyr-45, Val-85, Phe-120, Asp-287, and Thr-327 each contribute to the FAD site.

Belongs to the ferredoxin--NADP reductase type 2 family. As to quaternary structure, homodimer. The cofactor is FAD.

It carries out the reaction 2 reduced [2Fe-2S]-[ferredoxin] + NADP(+) + H(+) = 2 oxidized [2Fe-2S]-[ferredoxin] + NADPH. This is Ferredoxin--NADP reductase from Wolbachia pipientis wMel.